The chain runs to 429 residues: tRNA(Ile2) 2-agmatinylcytidine synthetase TiaS (429 aa).

The OB DNA-binding region spans 271 to 343 (VRGKVIKKYW…LTLNLEKFYP (73 aa)).

Belongs to the TiaS family.

It localises to the cytoplasm. It carries out the reaction cytidine(34) in tRNA(Ile2) + agmatine + ATP + H2O = 2-agmatinylcytidine(34) in tRNA(Ile2) + AMP + 2 phosphate + 2 H(+). Its function is as follows. ATP-dependent agmatine transferase that catalyzes the formation of 2-agmatinylcytidine (agm2C) at the wobble position (C34) of tRNA(Ile2), converting the codon specificity from AUG to AUA. The protein is tRNA(Ile2) 2-agmatinylcytidine synthetase TiaS of Thermococcus sibiricus (strain DSM 12597 / MM 739).